The sequence spans 361 residues: Spermidine/putrescine import ATP-binding protein PotA (361 aa).

An ABC transporter domain is found at Ile7–Ile241. Position 43–50 (Gly43–Thr50) interacts with ATP.

It belongs to the ABC transporter superfamily. Spermidine/putrescine importer (TC 3.A.1.11.1) family. As to quaternary structure, the complex is composed of two ATP-binding proteins (PotA), two transmembrane proteins (PotB and PotC) and a solute-binding protein (PotD).

It localises to the cell inner membrane. The enzyme catalyses ATP + H2O + polyamine-[polyamine-binding protein]Side 1 = ADP + phosphate + polyamineSide 2 + [polyamine-binding protein]Side 1.. Its function is as follows. Part of the ABC transporter complex PotABCD involved in spermidine/putrescine import. Responsible for energy coupling to the transport system. The polypeptide is Spermidine/putrescine import ATP-binding protein PotA (Pseudomonas fluorescens (strain Pf0-1)).